The following is a 55-amino-acid chain: Accessory gland-specific peptide 70A (55 aa).

The signal sequence occupies residues 1 to 19 (MKTLSLFLVLVCLLGLVQS). A hydroxyproline mark is found at Pro-28, Pro-32, Pro-34, and Pro-38. Cys-43 and Cys-55 are oxidised to a cystine.

As to expression, main cells of the accessory glands of males (paragonial gland).

The protein localises to the secreted. In terms of biological role, represses female sexual receptivity and stimulates oviposition. The sequence is that of Accessory gland-specific peptide 70A (Acp70A) from Drosophila mauritiana (Fruit fly).